Consider the following 494-residue polypeptide: Hydroxyneurosporene desaturase (494 aa).

Belongs to the carotenoid/retinoid oxidoreductase family.

It carries out the reaction rhodopin + A = (3E)-3,4-didehydrorhodopin + AH2. It participates in carotenoid biosynthesis; spheroidene biosynthesis. In terms of biological role, catalyzes the introduction of C-3,4 double bonds into 1-hydroxyneurosporene (1-HO-Neu) to yield demethylspheroidene (DMS). This is Hydroxyneurosporene desaturase (crtD) from Rhodobacter capsulatus (strain ATCC BAA-309 / NBRC 16581 / SB1003).